The chain runs to 500 residues: Glutamyl-tRNA(Gln) amidotransferase subunit A (500 aa).

Catalysis depends on charge relay system residues lysine 93 and serine 168. Serine 192 functions as the Acyl-ester intermediate in the catalytic mechanism.

It belongs to the amidase family. GatA subfamily. In terms of assembly, heterotrimer of A, B and C subunits.

It catalyses the reaction L-glutamyl-tRNA(Gln) + L-glutamine + ATP + H2O = L-glutaminyl-tRNA(Gln) + L-glutamate + ADP + phosphate + H(+). Functionally, allows the formation of correctly charged Gln-tRNA(Gln) through the transamidation of misacylated Glu-tRNA(Gln) in organisms which lack glutaminyl-tRNA synthetase. The reaction takes place in the presence of glutamine and ATP through an activated gamma-phospho-Glu-tRNA(Gln). This is Glutamyl-tRNA(Gln) amidotransferase subunit A from Corynebacterium jeikeium (strain K411).